The primary structure comprises 175 residues: NAD(P)H-quinone oxidoreductase subunit I, chloroplastic (175 aa).

4Fe-4S ferredoxin-type domains are found at residues 55–84 (GRIH…VNWE) and 95–124 (QTYS…MTEE). 8 residues coordinate [4Fe-4S] cluster: Cys-64, Cys-67, Cys-70, Cys-74, Cys-104, Cys-107, Cys-110, and Cys-114.

Belongs to the complex I 23 kDa subunit family. As to quaternary structure, NDH is composed of at least 16 different subunits, 5 of which are encoded in the nucleus. It depends on [4Fe-4S] cluster as a cofactor.

Its subcellular location is the plastid. It is found in the chloroplast thylakoid membrane. The catalysed reaction is a plastoquinone + NADH + (n+1) H(+)(in) = a plastoquinol + NAD(+) + n H(+)(out). The enzyme catalyses a plastoquinone + NADPH + (n+1) H(+)(in) = a plastoquinol + NADP(+) + n H(+)(out). NDH shuttles electrons from NAD(P)H:plastoquinone, via FMN and iron-sulfur (Fe-S) centers, to quinones in the photosynthetic chain and possibly in a chloroplast respiratory chain. The immediate electron acceptor for the enzyme in this species is believed to be plastoquinone. Couples the redox reaction to proton translocation, and thus conserves the redox energy in a proton gradient. This Chlorokybus atmophyticus (Soil alga) protein is NAD(P)H-quinone oxidoreductase subunit I, chloroplastic.